The sequence spans 22 residues: Brevinin-1OKd (22 aa).

A Lysine amide modification is found at lysine 22.

Expressed by the skin glands.

Its subcellular location is the secreted. Antimicrobial peptide. The protein is Brevinin-1OKd of Nidirana okinavana (Kampira Falls frog).